The primary structure comprises 789 residues: Bifunctional purine biosynthetic protein PUR2,5 (789 aa).

The interval 1 to 428 (MEKINVLVVG…NRTDIAHRAF (428 aa)) is GARS. The ATP-grasp domain maps to 114-321 (KDFMKKHNIP…LLELMLATVE (208 aa)). 140–201 (IANSSHNLVI…EEFLEGDELS (62 aa)) serves as a coordination point for ATP. 2 residues coordinate Mg(2+): glutamate 291 and asparagine 293. An AIRS region spans residues 438 to 773 (LTYEDAGVSV…TVYTIGKLVE (336 aa)).

In the N-terminal section; belongs to the GARS family. This sequence in the C-terminal section; belongs to the AIR synthase family. Mg(2+) serves as cofactor. It depends on Mn(2+) as a cofactor.

The protein resides in the cytoplasm. It localises to the cytosol. The catalysed reaction is 2-formamido-N(1)-(5-O-phospho-beta-D-ribosyl)acetamidine + ATP = 5-amino-1-(5-phospho-beta-D-ribosyl)imidazole + ADP + phosphate + H(+). It carries out the reaction 5-phospho-beta-D-ribosylamine + glycine + ATP = N(1)-(5-phospho-beta-D-ribosyl)glycinamide + ADP + phosphate + H(+). It participates in purine metabolism; IMP biosynthesis via de novo pathway; 5-amino-1-(5-phospho-D-ribosyl)imidazole from N(2)-formyl-N(1)-(5-phospho-D-ribosyl)glycinamide: step 2/2. Its pathway is purine metabolism; IMP biosynthesis via de novo pathway; N(1)-(5-phospho-D-ribosyl)glycinamide from 5-phospho-alpha-D-ribose 1-diphosphate: step 2/2. Catalyzes the second and fifth step in the 'de novo' purine biosynthesis pathway; contains phosphoribosylamine--glycine ligase (GARS) and phosphoribosylformylglycinamidine cyclo-ligase (AIRS) activities. The protein is Bifunctional purine biosynthetic protein PUR2,5 of Pichia angusta (Yeast).